Reading from the N-terminus, the 202-residue chain is Peptidyl-tRNA hydrolase (202 aa).

TRNA is bound at residue tyrosine 14. The active-site Proton acceptor is histidine 19. TRNA contacts are provided by phenylalanine 64, asparagine 66, and asparagine 112.

Belongs to the PTH family. In terms of assembly, monomer.

The protein localises to the cytoplasm. It catalyses the reaction an N-acyl-L-alpha-aminoacyl-tRNA + H2O = an N-acyl-L-amino acid + a tRNA + H(+). In terms of biological role, hydrolyzes ribosome-free peptidyl-tRNAs (with 1 or more amino acids incorporated), which drop off the ribosome during protein synthesis, or as a result of ribosome stalling. Catalyzes the release of premature peptidyl moieties from peptidyl-tRNA molecules trapped in stalled 50S ribosomal subunits, and thus maintains levels of free tRNAs and 50S ribosomes. This Methylobacterium radiotolerans (strain ATCC 27329 / DSM 1819 / JCM 2831 / NBRC 15690 / NCIMB 10815 / 0-1) protein is Peptidyl-tRNA hydrolase.